A 277-amino-acid polypeptide reads, in one-letter code: Large ribosomal subunit protein uL2 (277 aa).

A disordered region spans residues M226–K277.

This sequence belongs to the universal ribosomal protein uL2 family. As to quaternary structure, part of the 50S ribosomal subunit. Forms a bridge to the 30S subunit in the 70S ribosome.

Its function is as follows. One of the primary rRNA binding proteins. Required for association of the 30S and 50S subunits to form the 70S ribosome, for tRNA binding and peptide bond formation. It has been suggested to have peptidyltransferase activity; this is somewhat controversial. Makes several contacts with the 16S rRNA in the 70S ribosome. The sequence is that of Large ribosomal subunit protein uL2 from Symbiobacterium thermophilum (strain DSM 24528 / JCM 14929 / IAM 14863 / T).